The primary structure comprises 394 residues: Zinc-regulated GTPase metalloprotein activator 1 (394 aa).

The short motif at 16–23 (EDCPELVP) is the psi-PxLVp motif element. 48–55 (GYLGAGKT) contributes to the GTP binding site. Residues cysteine 106, cysteine 108, and cysteine 109 each contribute to the Zn(2+) site. The short motif at 106–109 (CLCC) is the CXCC motif element. Residues 109–113 (CSVKD) and 202–205 (NKTD) each bind GTP. The CobW C-terminal domain occupies 272 to 375 (IVTVTFDVPG…ILQQLFITAV (104 aa)).

This sequence belongs to the SIMIBI class G3E GTPase family. ZNG1 subfamily.

It is found in the nucleus. It carries out the reaction GTP + H2O = GDP + phosphate + H(+). In terms of biological role, zinc chaperone that directly transfers zinc cofactor to target metalloproteins, thereby activating them. Catalyzes zinc insertion into the active site of methionine aminopeptidase METAP1, which function to cleave the initiator methionine from polypeptides during or after protein translation. Mechanistically, the N-terminal psi-PxLVp motif binds to the C6H2-type zinc finger of inactive form of METAP1. After formation of the docked complex, zinc is transferred from the CXCC motif in the GTPase domain of ZNG1 to the zinc binding site in the peptidase domain of METAP1 in a process requiring GTP hydrolysis. GTP/GDP exchange is required for release of active METAP1. This chain is Zinc-regulated GTPase metalloprotein activator 1 (Zng1), found in Rattus norvegicus (Rat).